A 352-amino-acid polypeptide reads, in one-letter code: Glycerol-1-phosphate dehydrogenase [NAD(P)+] (352 aa).

Residues 98–102 (GKAID) and 120–123 (TAAS) contribute to the NAD(+) site. Aspartate 125 contributes to the substrate binding site. An NAD(+)-binding site is contributed by serine 129. Residue aspartate 172 participates in substrate binding. Positions 172 and 252 each coordinate Zn(2+). Histidine 256 is a binding site for substrate. Histidine 268 lines the Zn(2+) pocket.

Belongs to the glycerol-1-phosphate dehydrogenase family. It depends on Zn(2+) as a cofactor.

The protein localises to the cytoplasm. It carries out the reaction sn-glycerol 1-phosphate + NAD(+) = dihydroxyacetone phosphate + NADH + H(+). The catalysed reaction is sn-glycerol 1-phosphate + NADP(+) = dihydroxyacetone phosphate + NADPH + H(+). It participates in membrane lipid metabolism; glycerophospholipid metabolism. Catalyzes the NAD(P)H-dependent reduction of dihydroxyacetonephosphate (DHAP or glycerone phosphate) to glycerol 1-phosphate (G1P). The G1P thus generated is used as the glycerophosphate backbone of phospholipids in the cellular membranes of Archaea. The sequence is that of Glycerol-1-phosphate dehydrogenase [NAD(P)+] from Haloarcula marismortui (strain ATCC 43049 / DSM 3752 / JCM 8966 / VKM B-1809) (Halobacterium marismortui).